We begin with the raw amino-acid sequence, 114 residues long: UPF0102 protein CD630_12710 (114 aa).

This sequence belongs to the UPF0102 family.

This chain is UPF0102 protein CD630_12710, found in Clostridioides difficile (strain 630) (Peptoclostridium difficile).